The primary structure comprises 392 residues: Alanine--glyoxylate aminotransferase (392 aa).

Phosphothreonine is present on T9. Position 209 is an N6-(pyridoxal phosphate)lysine (K209). Residue K225 is modified to N6-acetyllysine; alternate. Residue K225 is modified to N6-succinyllysine; alternate. N6-acetyllysine occurs at positions 234 and 312. R360 is a substrate binding site.

It belongs to the class-V pyridoxal-phosphate-dependent aminotransferase family. Homodimer. Pyridoxal 5'-phosphate is required as a cofactor. As to expression, liver.

It is found in the peroxisome. It carries out the reaction L-serine + pyruvate = 3-hydroxypyruvate + L-alanine. The enzyme catalyses glyoxylate + L-alanine = glycine + pyruvate. With respect to regulation, alanine--glyoxylate aminotransferase activity is inhibited by 1 mM (aminooxy)acetic acid by 97.5%. In terms of biological role, peroxisomal aminotransferase that catalyzes the transamination of glyoxylate to glycine and contributes to the glyoxylate detoxification. Also catalyzes the transamination between L-serine and pyruvate and contributes to gluconeogenesis from the L-serine metabolism. In Homo sapiens (Human), this protein is Alanine--glyoxylate aminotransferase.